The sequence spans 313 residues: WD repeat-containing protein 82 (313 aa).

6 WD repeats span residues Glu-19 to Thr-58, Gly-105 to Leu-144, His-146 to Phe-184, Asp-192 to Thr-231, Ala-236 to Val-276, and Lys-280 to Asp-313.

Belongs to the WD repeat SWD2 family. Component of the SET1/COMPASS complex, at least composed of the catalytic subunit (SETD1A or SETD1B), WDR5, WDR82, RBBP5, ASH2L/ASH2, CXXC1/CFP1, HCFC1 and DPY30. Component of the PNUTS-PP1 phosphatase complex, composed of PPP1R10/PNUTS, TOX4, WDR82, and PPP1CA or PPP1CB or PPP1CC. Associated with multiple protein complexes including an RNA polymerase II complex, MLL3/MLL4 complex and a chaperonin-containing TCP1 complex. Interacts with SETD1B (via N-terminal region); the interaction is direct. Interacts with SETD1A (via N-terminal region); the interaction is direct. Interacts with CUL4B. Interacts with RBBP5. Interacts with POLR2B. Interacts with hyperphosphorylated C-terminal domain (CTD) of RNA polymerase II large subunit (POLR2A). Binds specifically to CTD heptad repeats phosphorylated on 'Ser-5' of each heptad. SETD1A enhances its interaction with POLR2A. Interacts with PPP1R10/PNUTS. Interacts with PPP1CA in the presence of PPP1R10/PNUTS. Interacts with ZC3H4; interaction is independent of the SET1 complex and promotes transcription termination of long non-coding RNAs (lncRNAs).

Its subcellular location is the nucleus. The protein resides in the chromosome. It localises to the cytoplasm. Regulatory component of the SET1/COMPASS complex implicated in the tethering of this complex to transcriptional start sites of active genes. Facilitates histone H3 'Lys-4' methylation (H3K4me) via recruitment of the SETD1A or SETD1B to the 'Ser-5' phosphorylated C-terminal domain (CTD) of RNA polymerase II large subunit (POLR2A). Component of the PNUTS-PP1 protein phosphatase complex, a protein phosphatase 1 (PP1) complex that promotes RNA polymerase II transcription pause-release, allowing transcription elongation. PNUTS-PP1 also plays a role in the control of chromatin structure and cell cycle progression during the transition from mitosis into interphase. Together with ZC3H4, but independently of the SET1 complex, part of a transcription termination checkpoint that promotes transcription termination of long non-coding RNAs (lncRNAs). The transcription termination checkpoint is activated by the inefficiently spliced first exon of lncRNAs and promotes transcription termination of lncRNAs and their subsequent degradation by the exosome. This chain is WD repeat-containing protein 82, found in Homo sapiens (Human).